The primary structure comprises 168 residues: Lipoprotein signal peptidase (168 aa).

The next 4 membrane-spanning stretches (helical) occupy residues 15 to 35, 47 to 67, 75 to 95, and 107 to 127; these read WLWL…IVME, VLPF…SFLS, WLFT…MSKL, and AMII…GFVV. Catalysis depends on residues Asp128 and Asp146. Residues 141–161 form a helical membrane-spanning segment; sequence AFNLADTAICLGAAMIILDGF.

It belongs to the peptidase A8 family.

Its subcellular location is the cell inner membrane. It catalyses the reaction Release of signal peptides from bacterial membrane prolipoproteins. Hydrolyzes -Xaa-Yaa-Zaa-|-(S,diacylglyceryl)Cys-, in which Xaa is hydrophobic (preferably Leu), and Yaa (Ala or Ser) and Zaa (Gly or Ala) have small, neutral side chains.. Its pathway is protein modification; lipoprotein biosynthesis (signal peptide cleavage). In terms of biological role, this protein specifically catalyzes the removal of signal peptides from prolipoproteins. In Vibrio vulnificus (strain CMCP6), this protein is Lipoprotein signal peptidase.